Here is a 213-residue protein sequence, read N- to C-terminus: MNTLIVNSHPDFSNPYSFTTILQEKFIELYNEHFPNHQLSILNLYDCVLPEITKEVLLSIWSKQRKGLELTADEIVQAKISKDLLEQFKSHHRIVFVSPMHNYNVTARAKTYIDNIFIAGETFKYTENGSVGLMTDDYRLLMLESAGSIYSKGQYSPYEFPVHYLKAIFKDFMAFDDFCVVRAEGTDILDRQVVLDKMNQDLREAFEAFYSKE.

Belongs to the azoreductase type 1 family. Homodimer. Requires FMN as cofactor.

It carries out the reaction 2 a quinone + NADH + H(+) = 2 a 1,4-benzosemiquinone + NAD(+). It catalyses the reaction N,N-dimethyl-1,4-phenylenediamine + anthranilate + 2 NAD(+) = 2-(4-dimethylaminophenyl)diazenylbenzoate + 2 NADH + 2 H(+). Its function is as follows. Quinone reductase that provides resistance to thiol-specific stress caused by electrophilic quinones. Also exhibits azoreductase activity. Catalyzes the reductive cleavage of the azo bond in aromatic azo compounds to the corresponding amines. The protein is FMN-dependent NADH:quinone oxidoreductase of Streptococcus agalactiae serotype III (strain NEM316).